Here is a 335-residue protein sequence, read N- to C-terminus: Pro-cathepsin H (335 aa).

Positions methionine 1–alanine 22 are cleaved as a signal peptide. Positions alanine 23–serine 97 are cleaved as a propeptide — activation peptide. Asparagine 72 and asparagine 101 each carry an N-linked (GlcNAc...) asparagine glycan. 4 disulfide bridges follow: cysteine 102-cysteine 327, cysteine 138-cysteine 181, cysteine 172-cysteine 214, and cysteine 272-cysteine 322. A propeptide spanning residues lysine 106 to proline 115 is cleaved from the precursor. The active site involves cysteine 141. A glycan (N-linked (GlcNAc...) asparagine) is linked at asparagine 230. Catalysis depends on residues histidine 281 and asparagine 301.

The protein belongs to the peptidase C1 family. Composed of a mini chain and a large chain. The large chain may be split into heavy and light chain. All chains are held together by disulfide bonds.

It is found in the lysosome. The catalysed reaction is Hydrolysis of proteins, acting as an aminopeptidase (notably, cleaving Arg-|-Xaa bonds) as well as an endopeptidase.. Functionally, important for the overall degradation of proteins in lysosomes. This chain is Pro-cathepsin H (CTSH), found in Bos taurus (Bovine).